A 446-amino-acid chain; its full sequence is Probable polyamine aminopropyl transferase (446 aa).

Residues 1 to 117 (MVEPAIGRNH…KRIACVVSAV (117 aa)) are unknown. Residues 64 to 94 (GRGAERWHRSPRQANGRFSNQRYSSTSPNSS) are disordered. Residues 75–94 (RQANGRFSNQRYSSTSPNSS) show a composition bias toward polar residues. In terms of domain architecture, PABS spans 116-351 (AVIFVATSCV…ELFAKKPGSG (236 aa)). The segment at 118–353 (IFVATSCVSP…FAKKPGSGSE (236 aa)) is spermidine synthase. Residues asparagine 147, glutamate 226, and 251 to 252 (DG) each bind S-methyl-5'-thioadenosine. Aspartate 269 serves as the catalytic Proton acceptor.

The protein belongs to the spermidine/spermine synthase family. As to quaternary structure, homodimer or homotetramer.

Its subcellular location is the cytoplasm. It carries out the reaction S-adenosyl 3-(methylsulfanyl)propylamine + putrescine = S-methyl-5'-thioadenosine + spermidine + H(+). Its pathway is amine and polyamine biosynthesis; spermidine biosynthesis; spermidine from putrescine: step 1/1. Catalyzes the irreversible transfer of a propylamine group from the amino donor S-adenosylmethioninamine (decarboxy-AdoMet) to putrescine (1,4-diaminobutane) to yield spermidine. This Bifidobacterium longum (strain NCC 2705) protein is Probable polyamine aminopropyl transferase (speE).